We begin with the raw amino-acid sequence, 468 residues long: ATP synthase subunit beta (468 aa).

ATP is bound at residue 155–162 (GGAGVGKT).

The protein belongs to the ATPase alpha/beta chains family. F-type ATPases have 2 components, CF(1) - the catalytic core - and CF(0) - the membrane proton channel. CF(1) has five subunits: alpha(3), beta(3), gamma(1), delta(1), epsilon(1). CF(0) has three main subunits: a(1), b(2) and c(9-12). The alpha and beta chains form an alternating ring which encloses part of the gamma chain. CF(1) is attached to CF(0) by a central stalk formed by the gamma and epsilon chains, while a peripheral stalk is formed by the delta and b chains.

It localises to the cell inner membrane. It carries out the reaction ATP + H2O + 4 H(+)(in) = ADP + phosphate + 5 H(+)(out). Functionally, produces ATP from ADP in the presence of a proton gradient across the membrane. The catalytic sites are hosted primarily by the beta subunits. In Thermotoga neapolitana (strain ATCC 49049 / DSM 4359 / NBRC 107923 / NS-E), this protein is ATP synthase subunit beta.